The chain runs to 400 residues: tRNA-specific 2-thiouridylase MnmA (400 aa).

ATP is bound by residues 19-26 and leucine 45; that span reads AMSGGVDS. Catalysis depends on cysteine 113, which acts as the Nucleophile. A disulfide bridge connects residues cysteine 113 and cysteine 210. ATP is bound at residue glycine 137. An interaction with tRNA region spans residues 160–162; the sequence is RDQ. The Cysteine persulfide intermediate role is filled by cysteine 210.

Belongs to the MnmA/TRMU family.

The protein resides in the cytoplasm. It catalyses the reaction S-sulfanyl-L-cysteinyl-[protein] + uridine(34) in tRNA + AH2 + ATP = 2-thiouridine(34) in tRNA + L-cysteinyl-[protein] + A + AMP + diphosphate + H(+). Functionally, catalyzes the 2-thiolation of uridine at the wobble position (U34) of tRNA, leading to the formation of s(2)U34. This chain is tRNA-specific 2-thiouridylase MnmA, found in Nitrobacter hamburgensis (strain DSM 10229 / NCIMB 13809 / X14).